The chain runs to 1172 residues: WD repeat-containing protein 48 homolog (1172 aa).

The segment at 1 to 115 (MYEYYSTGKI…HSYGGGGGGT (115 aa)) is disordered. Positions 13–36 (LPQQVDSNGINSKPMNSSPSTPIP) are enriched in polar residues. Positions 37–63 (NNNNNNNNNNNNNNNNNNNNNNNNNNN) are enriched in low complexity. Residues 64–89 (RNKSQQSFYLNNNNRNCGFSSPTKPQ) show a composition bias toward polar residues. Residues 90 to 107 (YNNNNNNNNNNNSNYNHS) are compositionally biased toward low complexity. WD repeat units lie at residues 152–202 (RHCF…GFKF), 208–246 (DHTD…CVNS), 249–548 (FHDD…SPMF), 560–599 (GEGI…KIFK), 602–641 (GHTD…CIQV), 645–683 (LHTD…QSRL), and 686–727 (RENE…NQSI). Over residues 341-365 (ISTNNNNNNSSSSNNNNNNNNNNNN) the composition is skewed to low complexity. The tract at residues 341 to 544 (ISTNNNNNNS…NDNNNLNKKF (204 aa)) is disordered. 3 stretches are compositionally biased toward polar residues: residues 366–377 (GQTNTHENTAET), 388–408 (QLSS…NFRN), and 417–434 (PPSS…SNGR). The span at 435–485 (NVNNRENNNNNNNNNNNNNNNNNNNNNNNNNNNNNNNNNINNNNHENNGNV) shows a compositional bias: low complexity. A compositionally biased stretch (acidic residues) spans 486–503 (DVDDEDDDDDDDDDDDDD). Basic and acidic residues predominate over residues 504 to 513 (CNKNKKKYDD). Residues 514–543 (NNNNNNYNNNNNKKNNSNDNNNDNNNLNKK) show a composition bias toward low complexity. Residues 745–769 (NNNNNNNNNNNNNNNNNNNNNNNNN) are compositionally biased toward low complexity. The segment at 745–775 (NNNNNNNNNNNNNNNNNNNNNNNNNNREKLS) is disordered. Residues 794-833 (QGRAGIIKNQVLNNRRQVLTKDNDNNVQLWDITKGKEIES) form a WD 8 repeat. The interval 926–986 (ELNHSNDSVN…TNSTTPNSGR (61 aa)) is disordered. A compositionally biased stretch (low complexity) spans 930 to 984 (SNDSVNSSLSSNTSGDNNNNNYNNYNNYNNNNNNGLQKSSSSSSIVSTNSTTPNS).

Belongs to the WD repeat WDR48 family.

This chain is WD repeat-containing protein 48 homolog, found in Dictyostelium discoideum (Social amoeba).